We begin with the raw amino-acid sequence, 370 residues long: Anhydro-N-acetylmuramic acid kinase (370 aa).

13-20 (GTSMDGID) is an ATP binding site.

The protein belongs to the anhydro-N-acetylmuramic acid kinase family.

It carries out the reaction 1,6-anhydro-N-acetyl-beta-muramate + ATP + H2O = N-acetyl-D-muramate 6-phosphate + ADP + H(+). The protein operates within amino-sugar metabolism; 1,6-anhydro-N-acetylmuramate degradation. Its pathway is cell wall biogenesis; peptidoglycan recycling. In terms of biological role, catalyzes the specific phosphorylation of 1,6-anhydro-N-acetylmuramic acid (anhMurNAc) with the simultaneous cleavage of the 1,6-anhydro ring, generating MurNAc-6-P. Is required for the utilization of anhMurNAc either imported from the medium or derived from its own cell wall murein, and thus plays a role in cell wall recycling. The sequence is that of Anhydro-N-acetylmuramic acid kinase from Rhizobium etli (strain ATCC 51251 / DSM 11541 / JCM 21823 / NBRC 15573 / CFN 42).